Consider the following 622-residue polypeptide: Microtubule-associated protein 70-1 (622 aa).

The disordered stretch occupies residues 1–27 (MSDVSADGGFLSAEQATTPVAIPTPYP). Positions 66-365 (DPVKVELNRL…LAISDRAAKS (300 aa)) form a coiled coil. The required for targeting to microtubules stretch occupies residues 250–483 (ILDRMHRQKV…YSFNKACDET (234 aa)). 2 disordered regions span residues 388 to 512 (SSIS…TEDN) and 579 to 622 (AAMR…RSTQ). Polar residues-rich tracts occupy residues 400 to 425 (SMSNGPSRRQSIGGSDNLQKFASNGF) and 432 to 453 (MRNSFTSNSTSVLKNAKGTSKS). 2 stretches are compositionally biased toward basic and acidic residues: residues 479–501 (ACDETKESESPNTWKEDSEEKPP) and 579–591 (AAMRVDKDQDNRA). A coiled-coil region spans residues 541 to 590 (DKDDAIEMLAKKVETLTKAMEVEAKKMRREVAAMEKEVAAMRVDKDQDNR). A compositionally biased stretch (polar residues) spans 594 to 605 (SSNTKPSSNTAQ).

It belongs to the MAP70 family. As to quaternary structure, interacts with MAP70.5 and itself.

The protein resides in the cytoplasm. The protein localises to the cytoskeleton. It is found in the phragmoplast. Its subcellular location is the spindle. In terms of biological role, plant-specific protein that interact with microtubules. In association with MAP70.5, is essential for the normal banding pattern of secondary cell wall and for the proper development of xylem tracheary elements and wood formation. The protein is Microtubule-associated protein 70-1 (MAP70.1) of Arabidopsis thaliana (Mouse-ear cress).